Here is a 161-residue protein sequence, read N- to C-terminus: Protein-export protein SecB (161 aa).

Belongs to the SecB family. Homotetramer, a dimer of dimers. One homotetramer interacts with 1 SecA dimer.

It is found in the cytoplasm. In terms of biological role, one of the proteins required for the normal export of preproteins out of the cell cytoplasm. It is a molecular chaperone that binds to a subset of precursor proteins, maintaining them in a translocation-competent state. It also specifically binds to its receptor SecA. This Rhodopseudomonas palustris (strain BisA53) protein is Protein-export protein SecB.